The sequence spans 398 residues: Succinate--CoA ligase [ADP-forming] subunit beta (398 aa).

The 246-residue stretch at 9-254 (KRLLHEYGAP…LSEEDPKEIE (246 aa)) folds into the ATP-grasp domain. ATP contacts are provided by residues Lys-46, 53–55 (GRG), Glu-109, Ala-112, and Glu-117. 2 residues coordinate Mg(2+): Asn-209 and Asp-223. Substrate-binding positions include Asn-274 and 331–333 (GIM).

This sequence belongs to the succinate/malate CoA ligase beta subunit family. In terms of assembly, heterotetramer of two alpha and two beta subunits. Mg(2+) serves as cofactor.

The catalysed reaction is succinate + ATP + CoA = succinyl-CoA + ADP + phosphate. It catalyses the reaction GTP + succinate + CoA = succinyl-CoA + GDP + phosphate. It participates in carbohydrate metabolism; tricarboxylic acid cycle; succinate from succinyl-CoA (ligase route): step 1/1. In terms of biological role, succinyl-CoA synthetase functions in the citric acid cycle (TCA), coupling the hydrolysis of succinyl-CoA to the synthesis of either ATP or GTP and thus represents the only step of substrate-level phosphorylation in the TCA. The beta subunit provides nucleotide specificity of the enzyme and binds the substrate succinate, while the binding sites for coenzyme A and phosphate are found in the alpha subunit. This Bartonella tribocorum (strain CIP 105476 / IBS 506) protein is Succinate--CoA ligase [ADP-forming] subunit beta.